Here is a 238-residue protein sequence, read N- to C-terminus: tRNA (guanine-N(7)-)-methyltransferase (238 aa).

S-adenosyl-L-methionine contacts are provided by Glu68, Glu93, Asp121, and Asp143. Residue Asp143 is part of the active site. Substrate-binding positions include Lys147, Asp179, and 216–219; that span reads TRYE.

This sequence belongs to the class I-like SAM-binding methyltransferase superfamily. TrmB family.

The catalysed reaction is guanosine(46) in tRNA + S-adenosyl-L-methionine = N(7)-methylguanosine(46) in tRNA + S-adenosyl-L-homocysteine. The protein operates within tRNA modification; N(7)-methylguanine-tRNA biosynthesis. In terms of biological role, catalyzes the formation of N(7)-methylguanine at position 46 (m7G46) in tRNA. The polypeptide is tRNA (guanine-N(7)-)-methyltransferase (Paramagnetospirillum magneticum (strain ATCC 700264 / AMB-1) (Magnetospirillum magneticum)).